Consider the following 291-residue polypeptide: Arabinogalactan O-methyltransferase 2 (291 aa).

The helical transmembrane segment at 18–38 (WFLAVALAGLIGGAMLITSFI) threads the bilayer.

This sequence belongs to the methyltransferase superfamily.

The protein resides in the golgi apparatus membrane. In terms of biological role, involved in the methylation of glucuronic acid of different plant cell wall component, but mainly on side chains of arabinogalactans. In Arabidopsis thaliana (Mouse-ear cress), this protein is Arabinogalactan O-methyltransferase 2.